A 326-amino-acid polypeptide reads, in one-letter code: Fructose-1,6-bisphosphatase class 1 2 (326 aa).

Residues Glu-84, Asp-103, Leu-105, and Asp-106 each coordinate Mg(2+). Residues 106–109 (DGSS), Asn-198, and Lys-262 contribute to the substrate site. Residue Glu-268 coordinates Mg(2+).

This sequence belongs to the FBPase class 1 family. In terms of assembly, homotetramer. Requires Mg(2+) as cofactor.

It is found in the cytoplasm. It catalyses the reaction beta-D-fructose 1,6-bisphosphate + H2O = beta-D-fructose 6-phosphate + phosphate. It functions in the pathway carbohydrate biosynthesis; gluconeogenesis. This Pseudoalteromonas translucida (strain TAC 125) protein is Fructose-1,6-bisphosphatase class 1 2.